A 399-amino-acid chain; its full sequence is Elongation factor Tu 2 (399 aa).

In terms of domain architecture, tr-type G spans 10–209 (KPHVNIGTIG…QVDGYIPEPE (200 aa)). The segment at 19–26 (GHVDHGKT) is G1. 19–26 (GHVDHGKT) serves as a coordination point for GTP. T26 is a Mg(2+) binding site. Positions 60 to 64 (GITIA) are G2. The G3 stretch occupies residues 81 to 84 (DCPG). GTP-binding positions include 81–85 (DCPGH) and 136–139 (NKAD). A G4 region spans residues 136 to 139 (NKAD). The interval 174 to 176 (SAL) is G5.

Belongs to the TRAFAC class translation factor GTPase superfamily. Classic translation factor GTPase family. EF-Tu/EF-1A subfamily. In terms of assembly, monomer.

Its subcellular location is the cytoplasm. It catalyses the reaction GTP + H2O = GDP + phosphate + H(+). GTP hydrolase that promotes the GTP-dependent binding of aminoacyl-tRNA to the A-site of ribosomes during protein biosynthesis. This is Elongation factor Tu 2 from Syntrophotalea carbinolica (strain DSM 2380 / NBRC 103641 / GraBd1) (Pelobacter carbinolicus).